Here is a 297-residue protein sequence, read N- to C-terminus: tRNA pseudouridine synthase B (297 aa).

Asp-44 acts as the Nucleophile in catalysis.

It belongs to the pseudouridine synthase TruB family. Type 1 subfamily.

It catalyses the reaction uridine(55) in tRNA = pseudouridine(55) in tRNA. Functionally, responsible for synthesis of pseudouridine from uracil-55 in the psi GC loop of transfer RNAs. The sequence is that of tRNA pseudouridine synthase B from Mycobacterium sp. (strain JLS).